Consider the following 314-residue polypeptide: Dihydroorotate dehydrogenase (fumarate) (314 aa).

Substrate is bound by residues lysine 46, 70–74 (NSMGL), and asparagine 130. 46–47 (KS) provides a ligand contact to FMN. An FMN-binding site is contributed by asparagine 130. Catalysis depends on nucleophile residues serine 132 and cysteine 133. The FMN site is built by lysine 167 and isoleucine 195. 196–197 (NS) lines the substrate pocket. Residues glycine 224, 252–253 (GG), and 274–275 (GT) contribute to the FMN site.

Belongs to the dihydroorotate dehydrogenase family. Type 1 subfamily. As to quaternary structure, homodimer. Requires FMN as cofactor.

Its subcellular location is the cytoplasm. The catalysed reaction is (S)-dihydroorotate + fumarate = orotate + succinate. The protein operates within pyrimidine metabolism; UMP biosynthesis via de novo pathway. In terms of biological role, catalyzes the conversion of dihydroorotate to orotate with fumarate as the electron acceptor. This Saccharomyces bayanus (Yeast) protein is Dihydroorotate dehydrogenase (fumarate) (URA1).